The chain runs to 398 residues: tRNA (guanine-N(7)-)-methyltransferase (398 aa).

Residues glutamate 124, glutamate 149, and aspartate 176 each contribute to the S-adenosyl-L-methionine site. Aspartate 232 serves as a coordination point for substrate.

It belongs to the class I-like SAM-binding methyltransferase superfamily. TrmB family.

It catalyses the reaction guanosine(46) in tRNA + S-adenosyl-L-methionine = N(7)-methylguanosine(46) in tRNA + S-adenosyl-L-homocysteine. Its pathway is tRNA modification; N(7)-methylguanine-tRNA biosynthesis. In terms of biological role, catalyzes the formation of N(7)-methylguanine at position 46 (m7G46) in tRNA. In Helicobacter acinonychis (strain Sheeba), this protein is tRNA (guanine-N(7)-)-methyltransferase.